The chain runs to 223 residues: Pleckstrin homology domain-containing family B member 1 (223 aa).

Residues 2 to 109 (ALVRGGWLWR…WKTALMEANS (108 aa)) form the PH domain.

In terms of assembly, homodimer. Interacts (via PH domain) with MYO1C. Interacts (via PH domain) with MYO7A. Binds transducins. As to expression, highly expressed in photoreceptor cells, oligodendrocytes and throughout the myelinated parts of the central nervous system. Detected in brain, liver, kidney, spleen and trachea.

It is found in the membrane. The protein resides in the cytoplasm. The sequence is that of Pleckstrin homology domain-containing family B member 1 (Plekhb1) from Rattus norvegicus (Rat).